The chain runs to 113 residues: UPF0342 protein SMU_782 (113 aa).

The protein belongs to the UPF0342 family.

The sequence is that of UPF0342 protein SMU_782 from Streptococcus mutans serotype c (strain ATCC 700610 / UA159).